The chain runs to 787 residues: Zinc finger protein 227 (787 aa).

The 72-residue stretch at 23-94 (VTFKDVAVVF…ERETQRNGHS (72 aa)) folds into the KRAB domain. 18 C2H2-type zinc fingers span residues 243–275 (HPCRVCGEGFSHGAVLPVHQVDPGEKCSHLQTH), 312–334 (YRCDSCGKAFGSSTGLIIHYRTH), 340–362 (YRCEACGKCFSQSSNFQCHQRVH), 368–390 (YKCEECGKGFGWSVNLRVHQRVH), 396–418 (YKCEECGKGFTQAAHYHIHQRVH), 424–446 (YKCDVCGKGFSHNSPLICHRRVH), 452–474 (YRCEACGKGFTRNTDLHIHFRVH), 480–502 (YTCKECGKGFSQASNLQVHQNVH), 508–530 (FKCETCGKGFSQSSKLQTHQRVH), 536–558 (YRCDVCGKDFSYSSNLKLHQVIH), 564–586 (YTCEACGKGFSWRSNLHAHQRVH), 592–614 (YKCEACDKSFSQAIDFRVHQRVH), 620–642 (YKCGVCGKGFSQSSGLQSHQRVH), 648–670 (YKCDVCGKGFRYSSQFIYHQRGH), 676–698 (YKCEECGKGFGRSLNLRHHQRVH), 704–726 (HKCEECGKAFSLPSNLRVHLSVH), 732–754 (FKCEDCGKGFSQSSRLQAHQRVH), and 760–782 (YKCNICGKDFSHRSRLTYHQKVH).

This sequence belongs to the krueppel C2H2-type zinc-finger protein family.

The protein resides in the nucleus. Its function is as follows. May be involved in transcriptional regulation. The sequence is that of Zinc finger protein 227 (ZNF227) from Bos taurus (Bovine).